Here is a 461-residue protein sequence, read N- to C-terminus: Cysteine--tRNA ligase (461 aa).

Cys-28 is a binding site for Zn(2+). Residues 30-40 (ITVYDLCHIGH) carry the 'HIGH' region motif. Zn(2+) is bound by residues Cys-209, His-234, and Glu-238. A 'KMSKS' region motif is present at residues 266–270 (KMSKS). Lys-269 serves as a coordination point for ATP.

Belongs to the class-I aminoacyl-tRNA synthetase family. Monomer. Zn(2+) serves as cofactor.

It is found in the cytoplasm. It catalyses the reaction tRNA(Cys) + L-cysteine + ATP = L-cysteinyl-tRNA(Cys) + AMP + diphosphate. The chain is Cysteine--tRNA ligase from Escherichia coli (strain K12 / MC4100 / BW2952).